A 133-amino-acid polypeptide reads, in one-letter code: Large ribosomal subunit protein uL15 (133 aa).

Residues 1–64 (MGLENLKPAK…QPLQRRLPKI (64 aa)) are disordered.

Belongs to the universal ribosomal protein uL15 family. Part of the 50S ribosomal subunit.

Functionally, binds to the 23S rRNA. This chain is Large ribosomal subunit protein uL15, found in Helicobacter pylori (strain Shi470).